The chain runs to 262 residues: Acyl-[acyl-carrier-protein]--UDP-N-acetylglucosamine O-acyltransferase (262 aa).

This sequence belongs to the transferase hexapeptide repeat family. LpxA subfamily. As to quaternary structure, homotrimer.

Its subcellular location is the cytoplasm. It catalyses the reaction a (3R)-hydroxyacyl-[ACP] + UDP-N-acetyl-alpha-D-glucosamine = a UDP-3-O-[(3R)-3-hydroxyacyl]-N-acetyl-alpha-D-glucosamine + holo-[ACP]. Its pathway is glycolipid biosynthesis; lipid IV(A) biosynthesis; lipid IV(A) from (3R)-3-hydroxytetradecanoyl-[acyl-carrier-protein] and UDP-N-acetyl-alpha-D-glucosamine: step 1/6. Involved in the biosynthesis of lipid A, a phosphorylated glycolipid that anchors the lipopolysaccharide to the outer membrane of the cell. This Salmonella paratyphi B (strain ATCC BAA-1250 / SPB7) protein is Acyl-[acyl-carrier-protein]--UDP-N-acetylglucosamine O-acyltransferase.